The sequence spans 444 residues: Alpha-1,3-mannosyl-glycoprotein 2-beta-N-acetylglucosaminyltransferase (444 aa).

The Cytoplasmic segment spans residues 1 to 6; the sequence is MARISC. A helical; Signal-anchor for type II membrane protein transmembrane segment spans residues 7 to 24; the sequence is DLRFLLIPAAFMFIYIQM. The Lumenal segment spans residues 25–444; sequence RLFQTQSQYA…SVMQLGIRNS (420 aa). A coiled-coil region spans residues 61 to 92; the sequence is KQSRIVALEDMKNRQDEELVQLKDLIQTFEKK. The substrate site is built by arginine 115, aspartate 144, histidine 188, and aspartate 210. A Mn(2+)-binding site is contributed by aspartate 211. Aspartate 287 serves as the catalytic Proton acceptor. Serine 318 lines the substrate pocket. Asparagine 351 carries an N-linked (GlcNAc...) asparagine glycan.

This sequence belongs to the glycosyltransferase 13 family. Mn(2+) serves as cofactor. Post-translationally, glycosylated. In terms of tissue distribution, expressed in roots, stems, leaves and flowers.

It is found in the golgi apparatus membrane. The catalysed reaction is N(4)-(alpha-D-Man-(1-&gt;3)-[alpha-D-Man-(1-&gt;3)-[alpha-D-Man-(1-&gt;6)]-alpha-D-Man-(1-&gt;6)]-beta-D-Man-(1-&gt;4)-beta-D-GlcNAc-(1-&gt;4)-beta-D-GlcNAc)-L-asparaginyl-[protein] (N-glucan mannose isomer 5A1,2) + UDP-N-acetyl-alpha-D-glucosamine = N(4)-{beta-D-GlcNAc-(1-&gt;2)-alpha-D-Man-(1-&gt;3)-[alpha-D-Man-(1-&gt;3)-[alpha-D-Man-(1-&gt;6)]-alpha-D-Man-(1-&gt;6)]-beta-D-Man-(1-&gt;4)-beta-D-GlcNAc-(1-&gt;4)-beta-D-GlcNAc}-L-asparaginyl-[protein] + UDP + H(+). Its pathway is protein modification; protein glycosylation. Functionally, initiates complex N-linked carbohydrate formation. Essential for the conversion of high-mannose to hybrid and complex N-glycans. Required for normal root growth and morphology. This is Alpha-1,3-mannosyl-glycoprotein 2-beta-N-acetylglucosaminyltransferase from Arabidopsis thaliana (Mouse-ear cress).